Consider the following 200-residue polypeptide: Recombination protein RecR (200 aa).

The segment at 58 to 73 (CEVCHNLAEEGLCAIC) adopts a C4-type zinc-finger fold. The Toprim domain occupies 81-176 (GLICVVEEPV…DISRLAYGMP (96 aa)).

This sequence belongs to the RecR family.

Functionally, may play a role in DNA repair. It seems to be involved in an RecBC-independent recombinational process of DNA repair. It may act with RecF and RecO. This chain is Recombination protein RecR, found in Magnetococcus marinus (strain ATCC BAA-1437 / JCM 17883 / MC-1).